The chain runs to 836 residues: Hypoxia-inducible factor 1-alpha (836 aa).

A disordered region spans residues 1–30 (MEGAGGENEKKKMSSERRKEKSRDAARSRR). The tract at residues 1–401 (MEGAGGENEK…KEPDALTLLA (401 aa)) is interaction with TSGA10. The segment covering 7–30 (ENEKKKMSSERRKEKSRDAARSRR) has biased composition (basic and acidic residues). Residues 17–70 (RRKEKSRDAARSRRSKESEVFYELAHQLPLPHNVSSHLDKASVMRLTISYLRVR) form the bHLH domain. Positions 21–30 (KSRDAARSRR) are DNA-binding. One can recognise a PAS 1 domain in the interval 80 to 155 (SEDEMKAQMD…EMLTHRNGPV (76 aa)). The interval 170-191 (RMKCTLTSRGRTMNIKSATWKV) is required for heterodimer formation with ARNT. The 71-residue stretch at 228–298 (PHPSNIEIPL…KTHHDMFTKG (71 aa)) folds into the PAS 2 domain. Ser247 is subject to Phosphoserine; by CK1. Residues 302-345 (TGQYRMLAKRGGYVWVETQATVIYNTKNSQPQCIVCVNYVVSGI) form the PAC domain. The tract at residues 380–417 (SEDTSCLFDKLKKEPDALTLLAPAAGDTIISLDFGSDD) is N-terminal VHL recognition site. Lys391 is covalently cross-linked (Glycyl lysine isopeptide (Lys-Gly) (interchain with G-Cter in SUMO)). Residues 401 to 613 (APAAGDTIIS…PSMSTVTGFQ (213 aa)) are ODD. Pro402 carries the post-translational modification 4-hydroxyproline. Lys476 is covalently cross-linked (Glycyl lysine isopeptide (Lys-Gly) (interchain with G-Cter in SUMO)). Positions 492–511 (QIQDQPASPSDGSTRQSSPE) are disordered. Residues 544–588 (FKLELVEKLFAEDTEAKNPFSTQDTDLDLEMLAPYIPMDDDFQLR) form an NTAD region. Residue Lys545 is modified to N6-acetyllysine; alternate. Residues Lys545, Lys551, and Lys560 each participate in a glycyl lysine isopeptide (Lys-Gly) (interchain with G-Cter in ubiquitin) cross-link. Lys545 participates in a covalent cross-link: Glycyl lysine isopeptide (Lys-Gly) (interchain with G-Cter in ubiquitin); alternate. The residue at position 564 (Ser564) is a Phosphoserine; by GSK3-beta. A Phosphothreonine; by GSK3-beta modification is found at Thr568. A C-terminal VHL recognition site region spans residues 569–585 (DLDLEMLAPYIPMDDDF). A 4-hydroxyproline modification is found at Pro577. A Phosphoserine; by PLK3 modification is found at Ser589. An ID region spans residues 589 to 795 (SFDQLSPLES…SDLACRLLGQ (207 aa)). Disordered regions lie at residues 593–684 (LSPL…DRAG) and 707–734 (QRNT…KMEH). Ser602 is subject to Phosphoserine; by GSK3-beta. Residues 608–620 (TVTGFQQTQLQKP) are compositionally biased toward polar residues. The segment covering 621-632 (TITATATTTATT) has biased composition (low complexity). Residues 633 to 647 (DESKTETKDNKEDIK) show a composition bias toward basic and acidic residues. Polar residues predominate over residues 652-678 (SPSSTQVPQETTTAKASAYSGTHSRTA). Ser668 carries the phosphoserine; by PLK3 modification. Lys719 carries the N6-acetyllysine modification. A Nuclear localization signal motif is present at residues 728–731 (RKRK). Residues 796–836 (SMDESGLPQLTSYDCEVNAPIQGSRNLLQGEELLRALDQVN) are CTAD. Cys810 bears the S-nitrosocysteine mark. The residue at position 813 (Asn813) is a (3S)-3-hydroxyasparagine.

As to quaternary structure, interacts with the ARNT; forms a heterodimer that binds core DNA sequence 5'-TACGTG-3' within the hypoxia response element (HRE) of target gene promoters. Interacts with COPS5; the interaction increases the transcriptional activity of HIF1A through increased stability. Interacts with EP300 (via TAZ-type 1 domains); the interaction is stimulated in response to hypoxia and inhibited by CITED2. Interacts with CREBBP (via TAZ-type 1 domains). Interacts with NCOA1, NCOA2, APEX1 and HSP90. Interacts (hydroxylated within the ODD domain) with VHLL (via beta domain); the interaction, leads to polyubiquitination and subsequent HIF1A proteasomal degradation. During hypoxia, sumoylated HIF1A also binds VHL; the interaction promotes the ubiquitination of HIF1A. Interacts with SENP1; the interaction desumoylates HIF1A resulting in stabilization and activation of transcription. Interacts (via the ODD domain) with NAA10; the interaction appears not to acetylate HIF1A nor have any affect on protein stability, during hypoxia. Interacts with RWDD3; the interaction enhances HIF1A sumoylation. Interacts with TSGA10. Interacts with HIF3A. Interacts with RORA (via the DNA binding domain); the interaction enhances HIF1A transcription under hypoxia through increasing protein stability. Interaction with PSMA7 inhibits the transactivation activity of HIF1A under both normoxic and hypoxia-mimicking conditions. Interacts with USP20. Interacts with RACK1; promotes HIF1A ubiquitination and proteasome-mediated degradation. Interacts (via N-terminus) with USP19. Interacts with SIRT2. Interacts (deacetylated form) with EGLN1. Interacts with CBFA2T3. Interacts with HSP90AA1 and HSP90AB1. Interacts with DCUN1D1; this interaction increases the interaction between VHL and DCUN1D1. Interacts with HIF1AN. In terms of processing, S-nitrosylation of Cys-810 may be responsible for increased recruitment of p300 coactivator necessary for transcriptional activity of HIF-1 complex. Requires phosphorylation for DNA-binding. Phosphorylation at Ser-247 by CSNK1D/CK1 represses kinase activity and impairs ARNT binding. Phosphorylation by GSK3-beta and PLK3 promote degradation by the proteasome. Post-translationally, sumoylated; with SUMO1 under hypoxia. Sumoylation is enhanced through interaction with RWDD3. Both sumoylation and desumoylation seem to be involved in the regulation of its stability during hypoxia. Sumoylation can promote either its stabilization or its VHL-dependent degradation by promoting hydroxyproline-independent HIF1A-VHL complex binding, thus leading to HIF1A ubiquitination and proteasomal degradation. Desumoylation by SENP1 increases its stability amd transcriptional activity. There is a disaccord between various publications on the effect of sumoylation and desumoylation on its stability and transcriptional activity. In terms of processing, acetylation of Lys-545 by ARD1 increases interaction with VHL and stimulates subsequent proteasomal degradation. Deacetylation of Lys-719 by SIRT2 increases its interaction with and hydroxylation by EGLN1 thereby inactivating HIF1A activity by inducing its proteasomal degradation. Ubiquitinated; in normoxia, following hydroxylation and interaction with VHL. Lys-545 appears to be the principal site of ubiquitination. Clioquinol, the Cu/Zn-chelator, inhibits ubiquitination through preventing hydroxylation at Asn-813. Ubiquitinated by E3 ligase VHL. Deubiquitinated by UCHL1. Post-translationally, the iron and 2-oxoglutarate dependent 3-hydroxylation of asparagine is (S) stereospecific within HIF CTAD domains. In terms of processing, in normoxia, is hydroxylated on Pro-402 and Pro-577 in the oxygen-dependent degradation domain (ODD) by EGLN1/PHD2 and EGLN2/PHD1. EGLN3/PHD3 has also been shown to hydroxylate Pro-577. The hydroxylated prolines promote interaction with VHL, initiating rapid ubiquitination and subsequent proteasomal degradation. Deubiquitinated by USP20. Under hypoxia, proline hydroxylation is impaired and ubiquitination is attenuated, resulting in stabilization. In normoxia, is hydroxylated on Asn-813 by HIF1AN, thus abrogating interaction with CREBBP and EP300 and preventing transcriptional activation. Repressed by iron ion, via Fe(2+) prolyl hydroxylase (PHD) enzymes-mediated hydroxylation and subsequent proteasomal degradation. Ubiquitous.

The protein localises to the cytoplasm. It localises to the nucleus. Its subcellular location is the nucleus speckle. With respect to regulation, induced by reactive oxygen species (ROS). Its function is as follows. Functions as a master transcriptional regulator of the adaptive response to hypoxia. Under hypoxic conditions, activates the transcription of over 40 genes, including erythropoietin, glucose transporters, glycolytic enzymes, vascular endothelial growth factor, HILPDA, and other genes whose protein products increase oxygen delivery or facilitate metabolic adaptation to hypoxia. Plays an essential role in embryonic vascularization, tumor angiogenesis and pathophysiology of ischemic disease. Heterodimerizes with ARNT; heterodimer binds to core DNA sequence 5'-TACGTG-3' within the hypoxia response element (HRE) of target gene promoters. Activation requires recruitment of transcriptional coactivators such as CREBBP and EP300. Activity is enhanced by interaction with NCOA1 and/or NCOA2. Interaction with redox regulatory protein APEX1 seems to activate CTAD and potentiates activation by NCOA1 and CREBBP. Involved in the axonal distribution and transport of mitochondria in neurons during hypoxia. The polypeptide is Hypoxia-inducible factor 1-alpha (Hif1a) (Mus musculus (Mouse)).